Consider the following 671-residue polypeptide: DNA ligase (671 aa).

NAD(+) is bound by residues 32-36 (DAEYD), 81-82 (SL), and glutamate 113. Lysine 115 acts as the N6-AMP-lysine intermediate in catalysis. The NAD(+) site is built by arginine 136, glutamate 173, lysine 290, and lysine 314. Zn(2+) is bound by residues cysteine 408, cysteine 411, cysteine 426, and cysteine 432. The BRCT domain occupies 593–671 (EIDSPFAGKT…EAEMLRLLGS (79 aa)).

It belongs to the NAD-dependent DNA ligase family. LigA subfamily. Mg(2+) serves as cofactor. It depends on Mn(2+) as a cofactor.

It catalyses the reaction NAD(+) + (deoxyribonucleotide)n-3'-hydroxyl + 5'-phospho-(deoxyribonucleotide)m = (deoxyribonucleotide)n+m + AMP + beta-nicotinamide D-nucleotide.. Functionally, DNA ligase that catalyzes the formation of phosphodiester linkages between 5'-phosphoryl and 3'-hydroxyl groups in double-stranded DNA using NAD as a coenzyme and as the energy source for the reaction. It is essential for DNA replication and repair of damaged DNA. The polypeptide is DNA ligase (Escherichia coli (strain SE11)).